We begin with the raw amino-acid sequence, 954 residues long: Glycine dehydrogenase (decarboxylating) (954 aa).

Position 704 is an N6-(pyridoxal phosphate)lysine (lysine 704).

Belongs to the GcvP family. In terms of assembly, the glycine cleavage system is composed of four proteins: P, T, L and H. Requires pyridoxal 5'-phosphate as cofactor.

The catalysed reaction is N(6)-[(R)-lipoyl]-L-lysyl-[glycine-cleavage complex H protein] + glycine + H(+) = N(6)-[(R)-S(8)-aminomethyldihydrolipoyl]-L-lysyl-[glycine-cleavage complex H protein] + CO2. The glycine cleavage system catalyzes the degradation of glycine. The P protein binds the alpha-amino group of glycine through its pyridoxal phosphate cofactor; CO(2) is released and the remaining methylamine moiety is then transferred to the lipoamide cofactor of the H protein. This is Glycine dehydrogenase (decarboxylating) from Vibrio cholerae serotype O1 (strain ATCC 39541 / Classical Ogawa 395 / O395).